Consider the following 107-residue polypeptide: Frataxin (107 aa).

Belongs to the frataxin family. Monomer.

Its subcellular location is the cytoplasm. Promotes the assembly and repair of iron-sulfur clusters by delivering Fe(2+) to proteins involved in these pathways. The chain is Frataxin (YFH1) from Trachipleistophora hominis (Microsporidian parasite).